A 64-amino-acid polypeptide reads, in one-letter code: Sperm protamine P1 (64 aa).

Residues 1–64 (MVRYRRHSRS…QSRRRRRRRY (64 aa)) are disordered.

The protein belongs to the protamine P1 family. Testis.

It is found in the nucleus. It localises to the chromosome. In terms of biological role, protamines substitute for histones in the chromatin of sperm during the haploid phase of spermatogenesis. They compact sperm DNA into a highly condensed, stable and inactive complex. The protein is Sperm protamine P1 (PRM1) of Dromiciops gliroides (Monito del Monte).